The sequence spans 184 residues: Protein PLANT CADMIUM RESISTANCE 5 (184 aa).

Over residues 1–26 the composition is skewed to polar residues; sequence MGRPVGQTNQAQPSVQHTASPSNKVS. The interval 1–33 is disordered; it reads MGRPVGQTNQAQPSVQHTASPSNKVSHNGGIGK. Residues 94-114 traverse the membrane as a helical segment; sequence AGLLYGALFFTGASFVYSYMF.

Belongs to the cornifelin family.

The protein localises to the membrane. Its function is as follows. May be involved in heavy metals transport. The chain is Protein PLANT CADMIUM RESISTANCE 5 (PCR5) from Arabidopsis thaliana (Mouse-ear cress).